The following is a 158-amino-acid chain: SsrA-binding protein (158 aa).

This sequence belongs to the SmpB family.

It is found in the cytoplasm. Its function is as follows. Required for rescue of stalled ribosomes mediated by trans-translation. Binds to transfer-messenger RNA (tmRNA), required for stable association of tmRNA with ribosomes. tmRNA and SmpB together mimic tRNA shape, replacing the anticodon stem-loop with SmpB. tmRNA is encoded by the ssrA gene; the 2 termini fold to resemble tRNA(Ala) and it encodes a 'tag peptide', a short internal open reading frame. During trans-translation Ala-aminoacylated tmRNA acts like a tRNA, entering the A-site of stalled ribosomes, displacing the stalled mRNA. The ribosome then switches to translate the ORF on the tmRNA; the nascent peptide is terminated with the 'tag peptide' encoded by the tmRNA and targeted for degradation. The ribosome is freed to recommence translation, which seems to be the essential function of trans-translation. This chain is SsrA-binding protein, found in Psychrobacter sp. (strain PRwf-1).